The primary structure comprises 667 residues: Putative L-type lectin-domain containing receptor kinase I.4 (667 aa).

The N-terminal stretch at 1-21 (MDCRLHLVLFFSCVCLICLSG) is a signal peptide. Topologically, residues 22–294 (QQETGFVYNG…PREEKKKLHP (273 aa)) are extracellular. Residues 24–257 (ETGFVYNGFH…NQYILGWSFS (234 aa)) are legume-lectin like. Residues N55, N110, N124, N128, N181, N204, and N225 are each glycosylated (N-linked (GlcNAc...) asparagine). The chain crosses the membrane as a helical span at residues 295-315 (LLIGLVILLVIPVLMVLGGVY). Over 316–667 (WYRRKKYAEV…THSILEGYGR (352 aa)) the chain is Cytoplasmic. Residues 350–625 (FVKDALVGKG…QYLSQKQPLP (276 aa)) form the Protein kinase domain. ATP contacts are provided by residues 356–364 (VGKGGFGKV) and K378. D474 functions as the Proton acceptor in the catalytic mechanism.

It in the C-terminal section; belongs to the protein kinase superfamily. Ser/Thr protein kinase family. This sequence in the N-terminal section; belongs to the leguminous lectin family.

It is found in the cell membrane. It catalyses the reaction L-seryl-[protein] + ATP = O-phospho-L-seryl-[protein] + ADP + H(+). The catalysed reaction is L-threonyl-[protein] + ATP = O-phospho-L-threonyl-[protein] + ADP + H(+). The polypeptide is Putative L-type lectin-domain containing receptor kinase I.4 (LECRK14) (Arabidopsis thaliana (Mouse-ear cress)).